A 221-amino-acid polypeptide reads, in one-letter code: Eukaryotic translation initiation factor NCBP (221 aa).

The protein belongs to the eukaryotic initiation factor 4E family. EIF4F is a multi-subunit complex, the composition of which varies with external and internal environmental conditions. It is composed of at least EIF4A, EIF4E and EIF4G. EIF4E is also known to interact with other partners. In higher plants two isoforms of EIF4F have been identified, named isoform EIF4F and isoform EIF(iso)4F. Isoform EIF4F has subunits p220 and p26, whereas isoform EIF(iso)4F has subunits p82 and p28.

Its function is as follows. Recognizes and binds the 7-methylguanosine-containing mRNA cap during an early step in the initiation of protein synthesis and facilitates ribosome binding by inducing the unwinding of the mRNAs secondary structures. In Arabidopsis thaliana (Mouse-ear cress), this protein is Eukaryotic translation initiation factor NCBP (NCBP).